The primary structure comprises 741 residues: MSFTNATFSQVLDDLSARFILNLPAEEQSSVERLCFQIEQAHWFYEDFIRAQNDQLPSLGLRVFSAKLFAHCPLLWKWSKVHEEAFDDFLRYKTRIPVRGAIMLDMSMQQCVLVKGWKASSGWGFPKGKIDKDESDVDCAIREVYEETGFDCSSRINPNEFIDMTIRGQNVRLYIIPGISLDTRFESRTRKEISKIEWHNLMDLPTFKKNKPQTMKNKFYMVIPFLAPLKKWIKKRNIANNTTKEKNISVDVDADASSQLLSLLKSSTAPSDLATPQPSTFPQPPVESHSSFDIKQKILHLLNEGNEPKSPIQLPPVSNLPLNPPIQSSNSRLSHDNNSFDPFAYLGLDPKNPSASFPRVVSQNNMLTNKPVLNNHFQQSMYSNLLKDQNSVQHLFAASDMPSPMELPSPSTVYHQVFYPPTSTSVSSYGLGKTPQPAYGSSSPYVNGHQTQQISSLPPFQSQTQFLARNSDNSGQSYNSEGDSNSKRLLSMLSQQDTTPSSSTLSKEANVQLANLFLTPNSLETKKFSDNSQGEEISDNLHGESCNNPNANSVHSAQLLQALLHPSATETKEETPKKTSDSLSLLTLLKSGLPTPANDLQNKSQNNERKASSQVKELEVKNYSKSTDLLKKTLRIPRNDEPLEAANQFDLLKVSPQQKSEVPPKRNELSQSKLKNRKKKENSETNKNHVDMSPGFVKILKRSPLADQKKEDTQESDFKGSDDHFLSYLQSVVSSNSNGLH.

Positions 1–243 (MSFTNATFSQ…KKRNIANNTT (243 aa)) are interaction with pdc1. A Nudix hydrolase domain is found at 94–227 (TRIPVRGAIM…KFYMVIPFLA (134 aa)). Positions 128–149 (GKIDKDESDVDCAIREVYEETG) match the Nudix box motif. 2 residues coordinate ATP: R167 and Y220. Polar residues-rich tracts occupy residues 268–278 (TAPSDLATPQP) and 439–453 (YGSS…QTQQ). Disordered regions lie at residues 268–289 (TAPS…VESH), 425–453 (SVSS…QTQQ), 525–552 (TKKF…PNAN), 592–616 (GLPT…SQVK), and 654–721 (VSPQ…FKGS). Basic and acidic residues-rich tracts occupy residues 606–616 (NNERKASSQVK), 681–690 (ENSETNKNHV), and 707–721 (DQKK…FKGS).

This sequence belongs to the Nudix hydrolase family. DCP2 subfamily. As to quaternary structure, component of the decapping complex composed of dcp1 and dcp2. Interacts with edc3. Interacts with pdc1; via N-terminus. Interacts with pdc2. Mn(2+) serves as cofactor.

Its subcellular location is the cytoplasm. The protein resides in the P-body. Catalytic component of the decapping complex necessary for the degradation of mRNAs, both in normal mRNA turnover and in nonsense-mediated mRNA decay. Removes the 7-methyl guanine cap structure from mRNA molecules, yielding a 5'-phosphorylated mRNA fragment and 7m-GDP. Decapping is the major pathway of mRNA degradation in yeast. It occurs through deadenylation, decapping and subsequent 5' to 3' exonucleolytic decay of the transcript body. This chain is mRNA decapping complex subunit 2 (dcp2), found in Schizosaccharomyces pombe (strain 972 / ATCC 24843) (Fission yeast).